We begin with the raw amino-acid sequence, 1129 residues long: Large proline-rich protein bag6 (1129 aa).

A Ubiquitin-like domain is found at 1 to 76 (MEVTVKTLDS…HLVERAPPQT (76 aa)). 8 disordered regions span residues 69–108 (VERA…PERN), 187–235 (QPVN…SPSE), 347–402 (TGNG…HPHP), 490–518 (PAAP…VPGA), 550–606 (GSNT…QHLS), 654–692 (VPVS…ESLP), 942–967 (VPQA…NGAA), and 987–1009 (VPTI…QWAA). Residues 73–105 (PPQTQPSTGGPSTSSSTSPSSSNAANVPGAGAP) show a composition bias toward low complexity. Polar residues-rich tracts occupy residues 209–232 (RETL…SHPS) and 364–383 (HTPT…QPPS). Low complexity-rich tracts occupy residues 553–593 (TPSS…SSGP) and 655–666 (PVSTSPPQSASQ). A compositionally biased stretch (pro residues) spans 667–686 (APPPSSPSPPPAHSSPPPAA). The span at 947 to 956 (EASSQDQPME) shows a compositional bias: polar residues.

In terms of assembly, component of the bag6/bat3 complex.

Its subcellular location is the cytoplasm. The protein localises to the cytosol. It localises to the nucleus. The protein resides in the secreted. It is found in the extracellular exosome. In terms of biological role, ATP-independent molecular chaperone preventing the aggregation of misfolded and hydrophobic patches-containing proteins. Functions as part of a cytosolic protein quality control complex, the bag6/bat3 complex, which maintains these client proteins in a soluble state and participates in their proper delivery to the endoplasmic reticulum or alternatively can promote their sorting to the proteasome where they undergo degradation. The bag6/bat3 complex is involved in the post-translational delivery of tail-anchored/type II transmembrane proteins to the endoplasmic reticulum membrane. Similarly, the bag6/bat3 complex also functions as a sorting platform for proteins of the secretory pathway that are mislocalized to the cytosol either delivering them to the proteasome for degradation or to the endoplasmic reticulum. The bag6/bat3 complex also plays a role in the endoplasmic reticulum-associated degradation (ERAD), a quality control mechanism that eliminates unwanted proteins of the endoplasmic reticulum through their retrotranslocation to the cytosol and their targeting to the proteasome. It maintains these retrotranslocated proteins in an unfolded yet soluble state condition in the cytosol to ensure their proper delivery to the proteasome. Also required for selective ubiquitin-mediated degradation of defective nascent chain polypeptides by the proteasome. Also involved in endoplasmic reticulum stress-induced pre-emptive quality control, a mechanism that selectively attenuates the translocation of newly synthesized proteins into the endoplasmic reticulum and reroutes them to the cytosol for proteasomal degradation. May ensure the proper degradation of these proteins and thereby protects the endoplasmic reticulum from protein overload upon stress. By stabilizing a large spectrum of proteins, may indirectly affect different biological processes including apoptosis. By controlling the steady-state expression of the IGF1R receptor, indirectly regulates the insulin-like growth factor receptor signaling pathway. Functionally, when nuclear, may also act as a component of some chromatin regulator complex. The protein is Large proline-rich protein bag6 of Xenopus tropicalis (Western clawed frog).